The primary structure comprises 342 residues: Elongation factor Ts (342 aa).

The involved in Mg(2+) ion dislocation from EF-Tu stretch occupies residues 80 to 83 (TDFV).

This sequence belongs to the EF-Ts family.

The protein resides in the cytoplasm. Its function is as follows. Associates with the EF-Tu.GDP complex and induces the exchange of GDP to GTP. It remains bound to the aminoacyl-tRNA.EF-Tu.GTP complex up to the GTP hydrolysis stage on the ribosome. In Lactobacillus delbrueckii subsp. bulgaricus (strain ATCC 11842 / DSM 20081 / BCRC 10696 / JCM 1002 / NBRC 13953 / NCIMB 11778 / NCTC 12712 / WDCM 00102 / Lb 14), this protein is Elongation factor Ts.